The chain runs to 244 residues: 5-oxoprolinase subunit A (244 aa).

It belongs to the LamB/PxpA family. In terms of assembly, forms a complex composed of PxpA, PxpB and PxpC.

It catalyses the reaction 5-oxo-L-proline + ATP + 2 H2O = L-glutamate + ADP + phosphate + H(+). Functionally, catalyzes the cleavage of 5-oxoproline to form L-glutamate coupled to the hydrolysis of ATP to ADP and inorganic phosphate. This is 5-oxoprolinase subunit A from Salmonella schwarzengrund (strain CVM19633).